A 247-amino-acid polypeptide reads, in one-letter code: Capsid protein (247 aa).

Residues 1-40 (MWGTSNCACAKFQIRRRYARPYRRRHIRRYRRRRRHFRRR) are DNA-binding. The interval 15–44 (RRRYARPYRRRHIRRYRRRRRHFRRRRFTT) is nuclear localization signals.

It belongs to the circoviridae capsid protein family. Homomultimer. Assembles in the nucleus, presumably in an immature form, then migrates to the cytoplasm once assembled as mature virion. Interacts with Rep; this interaction relocates Rep into the nucleus.

It localises to the host nucleus. The protein localises to the virion. In terms of biological role, self-assembles to form the virion icosahedral capsid with a T=1 symmetry. This very small capsid (17 - 22 nm in diameter) allows the virus to be very stable in the environment and resistant to some disinfectants, including detergents. Essential for the initial attachment to heparan sulfate moieties and chondroitin sulfate B of the host cell surface proteoglycans. After attachment, the virus is endocytosed and traffics to the nucleus. The capsid protein binds and transports the viral genome and Rep across the nuclear envelope. In Beak and feather disease virus (BFDV), this protein is Capsid protein (Cap).